A 290-amino-acid chain; its full sequence is Bifunctional protein FolD 1 (290 aa).

NADP(+) is bound by residues 172-174 and I238; that span reads GAS.

This sequence belongs to the tetrahydrofolate dehydrogenase/cyclohydrolase family. Homodimer.

The enzyme catalyses (6R)-5,10-methylene-5,6,7,8-tetrahydrofolate + NADP(+) = (6R)-5,10-methenyltetrahydrofolate + NADPH. It carries out the reaction (6R)-5,10-methenyltetrahydrofolate + H2O = (6R)-10-formyltetrahydrofolate + H(+). The protein operates within one-carbon metabolism; tetrahydrofolate interconversion. Functionally, catalyzes the oxidation of 5,10-methylenetetrahydrofolate to 5,10-methenyltetrahydrofolate and then the hydrolysis of 5,10-methenyltetrahydrofolate to 10-formyltetrahydrofolate. This chain is Bifunctional protein FolD 1, found in Pseudomonas putida (strain GB-1).